We begin with the raw amino-acid sequence, 688 residues long: Glycine--tRNA ligase beta subunit (688 aa).

It belongs to the class-II aminoacyl-tRNA synthetase family. In terms of assembly, tetramer of two alpha and two beta subunits.

The protein localises to the cytoplasm. It catalyses the reaction tRNA(Gly) + glycine + ATP = glycyl-tRNA(Gly) + AMP + diphosphate. This chain is Glycine--tRNA ligase beta subunit, found in Actinobacillus pleuropneumoniae serotype 7 (strain AP76).